A 139-amino-acid chain; its full sequence is 3-hydroxyacyl-[acyl-carrier-protein] dehydratase FabZ (139 aa).

The active site involves H47.

This sequence belongs to the thioester dehydratase family. FabZ subfamily.

It is found in the cytoplasm. It carries out the reaction a (3R)-hydroxyacyl-[ACP] = a (2E)-enoyl-[ACP] + H2O. Involved in unsaturated fatty acids biosynthesis. Catalyzes the dehydration of short chain beta-hydroxyacyl-ACPs and long chain saturated and unsaturated beta-hydroxyacyl-ACPs. The chain is 3-hydroxyacyl-[acyl-carrier-protein] dehydratase FabZ from Oenococcus oeni (strain ATCC BAA-331 / PSU-1).